Here is a 1527-residue protein sequence, read N- to C-terminus: DNA (cytosine-5)-methyltransferase 1A (1527 aa).

2 disordered regions span residues 1–62 (MAKS…PKRA) and 661–718 (GDTK…KEIK). 2 stretches are compositionally biased toward acidic residues: residues 25–36 (EPVENENLESEF) and 664–692 (KEED…EVNV). Residues 709 to 718 (SSADTRKEIK) show a composition bias toward basic and acidic residues. 2 consecutive BAH domains span residues 742–874 (LSIS…FSLP) and 910–1049 (ITYN…KQLP). The SAM-dependent MTase C5-type domain occupies 1092–1526 (LATLDIFAGC…RKLKQAIDAK (435 aa)). The active site involves cysteine 1197.

This sequence belongs to the class I-like SAM-binding methyltransferase superfamily. C5-methyltransferase family. As to expression, expressed in roots and inflorescences. Expressed in roots, panicles, anthers, pistils, endosperm and imbibed embryos. Expressed in tissues containing actively replicating and dividing cells, such as shoot and root meristems.

It localises to the nucleus. It catalyses the reaction a 2'-deoxycytidine in DNA + S-adenosyl-L-methionine = a 5-methyl-2'-deoxycytidine in DNA + S-adenosyl-L-homocysteine + H(+). Probably methylates CpG residues and maintains DNA methylation. May be involved in methylation-dependent gene silencing. May play a minor role in the maintenance of DNA methylation. The chain is DNA (cytosine-5)-methyltransferase 1A from Oryza sativa subsp. japonica (Rice).